The primary structure comprises 291 residues: Porphobilinogen deaminase (291 aa).

Cys-233 bears the S-(dipyrrolylmethanemethyl)cysteine mark.

It belongs to the HMBS family. In terms of assembly, monomer. The cofactor is dipyrromethane.

It carries out the reaction 4 porphobilinogen + H2O = hydroxymethylbilane + 4 NH4(+). It participates in porphyrin-containing compound metabolism; protoporphyrin-IX biosynthesis; coproporphyrinogen-III from 5-aminolevulinate: step 2/4. Its function is as follows. Tetrapolymerization of the monopyrrole PBG into the hydroxymethylbilane pre-uroporphyrinogen in several discrete steps. The chain is Porphobilinogen deaminase (hemC) from Ruminiclostridium josui (Clostridium josui).